The following is a 72-amino-acid chain: Translation initiation factor IF-1 (72 aa).

The 72-residue stretch at 1–72 (MAKDDVIEVE…TRGRITYRFK (72 aa)) folds into the S1-like domain.

It belongs to the IF-1 family. As to quaternary structure, component of the 30S ribosomal translation pre-initiation complex which assembles on the 30S ribosome in the order IF-2 and IF-3, IF-1 and N-formylmethionyl-tRNA(fMet); mRNA recruitment can occur at any time during PIC assembly.

The protein localises to the cytoplasm. Its function is as follows. One of the essential components for the initiation of protein synthesis. Stabilizes the binding of IF-2 and IF-3 on the 30S subunit to which N-formylmethionyl-tRNA(fMet) subsequently binds. Helps modulate mRNA selection, yielding the 30S pre-initiation complex (PIC). Upon addition of the 50S ribosomal subunit IF-1, IF-2 and IF-3 are released leaving the mature 70S translation initiation complex. The chain is Translation initiation factor IF-1 from Streptococcus pneumoniae serotype 2 (strain D39 / NCTC 7466).